Here is a 425-residue protein sequence, read N- to C-terminus: Serine--tRNA ligase (425 aa).

Position 230–232 (230–232 (TAE)) interacts with L-serine. An ATP-binding site is contributed by 261-263 (RSE). Residue Glu-284 participates in L-serine binding. 348 to 351 (EISS) is a binding site for ATP. Residue Ser-384 coordinates L-serine.

This sequence belongs to the class-II aminoacyl-tRNA synthetase family. Type-1 seryl-tRNA synthetase subfamily. Homodimer. The tRNA molecule binds across the dimer.

The protein localises to the cytoplasm. The catalysed reaction is tRNA(Ser) + L-serine + ATP = L-seryl-tRNA(Ser) + AMP + diphosphate + H(+). It catalyses the reaction tRNA(Sec) + L-serine + ATP = L-seryl-tRNA(Sec) + AMP + diphosphate + H(+). It functions in the pathway aminoacyl-tRNA biosynthesis; selenocysteinyl-tRNA(Sec) biosynthesis; L-seryl-tRNA(Sec) from L-serine and tRNA(Sec): step 1/1. In terms of biological role, catalyzes the attachment of serine to tRNA(Ser). Is also able to aminoacylate tRNA(Sec) with serine, to form the misacylated tRNA L-seryl-tRNA(Sec), which will be further converted into selenocysteinyl-tRNA(Sec). This Streptococcus pyogenes serotype M12 (strain MGAS2096) protein is Serine--tRNA ligase.